Reading from the N-terminus, the 465-residue chain is MSSELMFNYTFSWPAGPKDVILTGTFDDWRGTLPLVKTAKGNFEITMPVKLANKDDTFQFKFIVDGVWCVSDSYKKEHVSEGIENNFLQITDLVETQEVAGASRIPEAGGLLCGKPPRSAGPPSTSNRKKNKRNNKKRRSKLKKKSTKNNKKSNESLDDNEEEDGVTGTTTEDVTGTSREETPLAEPTNVSKEAPGNFHILPIDQSADTTXSNGIIGGPGPVLVPNPGEIKEFTEIRDVDARELNERLNKKEEVPEPVAGPIVESSVTEKSPALPQADDPIVETKEVAHNVQELTPQVEAVTPLINEPEPLPTPEAQISIPESSKVEPVEGSLQSKLVEKRESTEGVLDGSKKVENKAKKDEEVFTLDPIVNKAPKLPLTDEQTAEGRKSPAVSEEKEKKKKQEKGSKEVKRSETSKEKKPSAKEVKKQTVKASKKQTASPLSSSTEEPKKKKTGFFGKLKKLFK.

Disordered stretches follow at residues Glu-107–Pro-227 and Arg-247–Gln-276. Basic residues predominate over residues Asn-127–Lys-151. Residues Ser-153 and Ser-156 each carry the phosphoserine modification. The span at Ser-156–Gly-165 shows a compositional bias: acidic residues. Residues Asn-160–Glu-161 form an X-DNA-binding region. Residues Val-166 to Thr-177 are compositionally biased toward low complexity. Thr-182 carries the phosphothreonine modification. Residue Ser-271 is modified to Phosphoserine. Residue Thr-295 is modified to Phosphothreonine. A disordered region spans residues Val-298–Lys-465. Phosphoserine occurs at positions 319 and 343. A compositionally biased stretch (basic and acidic residues) spans Leu-337–Glu-363. Thr-366 carries the phosphothreonine modification. 2 stretches are compositionally biased toward basic and acidic residues: residues Ala-385–Glu-398 and Glu-404–Lys-428. Ser-394 is subject to Phosphoserine. At Ser-440 the chain carries Phosphoserine. Over residues Lys-451–Lys-465 the composition is skewed to basic residues.

Belongs to the CRP1/MDG1 family. Post-translationally, cleaved in the vicinity of position 160 to give an X-DNA-binding N-terminal subpeptide and a non-DNA-binding C-terminal subpeptide.

Its function is as follows. Cruciform DNA-binding protein which exerts an enhancing effect on the cleavage of cruciform DNA (X-DNA) by endonuclease VII from bacteriophage T4. The sequence is that of Cruciform DNA-recognizing protein 1 (CRP1) from Saccharomyces cerevisiae (strain VIN 13) (Baker's yeast).